The sequence spans 363 residues: UDP-N-acetylglucosamine--N-acetylmuramyl-(pentapeptide) pyrophosphoryl-undecaprenol N-acetylglucosamine transferase (363 aa).

UDP-N-acetyl-alpha-D-glucosamine is bound by residues 10 to 12, Asn-124, Ser-195, Ile-250, and Gln-295; that span reads TGG.

This sequence belongs to the glycosyltransferase 28 family. MurG subfamily.

Its subcellular location is the cell membrane. It catalyses the reaction di-trans,octa-cis-undecaprenyl diphospho-N-acetyl-alpha-D-muramoyl-L-alanyl-D-glutamyl-meso-2,6-diaminopimeloyl-D-alanyl-D-alanine + UDP-N-acetyl-alpha-D-glucosamine = di-trans,octa-cis-undecaprenyl diphospho-[N-acetyl-alpha-D-glucosaminyl-(1-&gt;4)]-N-acetyl-alpha-D-muramoyl-L-alanyl-D-glutamyl-meso-2,6-diaminopimeloyl-D-alanyl-D-alanine + UDP + H(+). It participates in cell wall biogenesis; peptidoglycan biosynthesis. Its function is as follows. Cell wall formation. Catalyzes the transfer of a GlcNAc subunit on undecaprenyl-pyrophosphoryl-MurNAc-pentapeptide (lipid intermediate I) to form undecaprenyl-pyrophosphoryl-MurNAc-(pentapeptide)GlcNAc (lipid intermediate II). The sequence is that of UDP-N-acetylglucosamine--N-acetylmuramyl-(pentapeptide) pyrophosphoryl-undecaprenol N-acetylglucosamine transferase from Halalkalibacterium halodurans (strain ATCC BAA-125 / DSM 18197 / FERM 7344 / JCM 9153 / C-125) (Bacillus halodurans).